A 149-amino-acid chain; its full sequence is UPF0179 protein MA_3685 (149 aa).

The protein belongs to the UPF0179 family.

The sequence is that of UPF0179 protein MA_3685 from Methanosarcina acetivorans (strain ATCC 35395 / DSM 2834 / JCM 12185 / C2A).